The primary structure comprises 294 residues: Factor associated with metabolism and energy (294 aa).

The span at M1 to V12 shows a compositional bias: basic residues. Disordered stretches follow at residues M1–T28 and F255–T279. A lipid anchor (N-myristoyl glycine) is attached at G2. The segment covering P17 to T28 has biased composition (polar residues). The segment covering K268–T279 has biased composition (basic and acidic residues).

As to expression, expressed in proximal tubules of the kidney.

The protein resides in the cell membrane. The protein localises to the cytoplasmic vesicle. In terms of biological role, may be involved in tuning the metabolism, energy expenditure, and excretion processes. The chain is Factor associated with metabolism and energy from Mus musculus (Mouse).